The sequence spans 146 residues: Heat-stable 19 kDa antigen (146 aa).

The first 20 residues, 1 to 20 (MKFSLLSAIAAAVFVPFTSA), serve as a signal peptide directing secretion.

The protein belongs to the cerato-platanin family. Post-translationally, glycosylated.

The protein localises to the secreted. This is Heat-stable 19 kDa antigen (CSA) from Coccidioides immitis (strain RS) (Valley fever fungus).